The primary structure comprises 419 residues: Transcription termination factor Rho (419 aa).

A Rho RNA-BD domain is found at 48–123 (DIFGDGVLEI…LKVNAVNYDK (76 aa)). RNA-binding regions lie at residues 61–66 (GFGFLR), 78–80 (DIY), and 108–110 (ERY). ATP-binding positions include 169 to 174 (GRGQRG), 181 to 186 (KAGKTI), and R212. An RNA-binding 2 region spans residues 284–288 (VLTGG).

It belongs to the Rho family. Homohexamer. The homohexamer assembles into an open ring structure.

In terms of biological role, facilitates transcription termination by a mechanism that involves Rho binding to the nascent RNA, activation of Rho's RNA-dependent ATPase activity, and release of the mRNA from the DNA template. In Buchnera aphidicola subsp. Schizaphis graminum (strain Sg), this protein is Transcription termination factor Rho.